We begin with the raw amino-acid sequence, 612 residues long: ETS-related transcription factor Elf-1 (612 aa).

A phosphoserine mark is found at serine 110, serine 163, serine 167, and serine 168. Polar residues predominate over residues 156–169 (VQETNADSPGASSP). Positions 156–199 (VQETNADSPGASSPEQRKRKKGRKTKPPRPDSPTTTPNISVKKK) are disordered. A compositionally biased stretch (basic residues) spans 172 to 182 (RKRKKGRKTKP). Serine 187 carries the phosphoserine modification. Position 190 is a phosphothreonine (threonine 190). The ETS DNA-binding region spans 208 to 290 (IYLWEFLLAL…EGQRLVYQFK (83 aa)). Residues 300 to 361 (DDEDPSSSIE…AANPKDPVEV (62 aa)) are disordered. Low complexity predominate over residues 305–322 (SSSIESSDQSLSSTTASS). Over residues 323 to 335 (RNQANRSRVSSSP) the composition is skewed to polar residues. Position 431 is a phosphoserine (serine 431). The segment covering 562–577 (EVEKKAEDDLNEDAEK) has biased composition (basic and acidic residues). The segment at 562–586 (EVEKKAEDDLNEDAEKSAQQPQPYV) is disordered.

This sequence belongs to the ETS family. Binds to the underphosphorylated form of RB. May interact with other transcription factors in order to regulate specific genes. Interacts with RUNX1. Interacts with SP1; the interaction is inhibited by glycosylation of SP1. As to expression, predominantly found in hematopoietic cells. Detected in other cell types such as fibroblasts.

It localises to the nucleus. Functionally, transcription factor that activates the LYN and BLK promoters. The sequence is that of ETS-related transcription factor Elf-1 (Elf1) from Mus musculus (Mouse).